A 503-amino-acid chain; its full sequence is Glycoprotein 3-alpha-L-fucosyltransferase A (503 aa).

At M1–K10 the chain is on the cytoplasmic side. Residues Y11–L28 form a helical; Signal-anchor for type II membrane protein membrane-spanning segment. The Lumenal portion of the chain corresponds to K29 to D503. The interval I44 to T71 is disordered. Over residues Q47–Q58 the composition is skewed to low complexity. N262, N295, and N299 each carry an N-linked (GlcNAc...) asparagine glycan.

The protein belongs to the glycosyltransferase 10 family. The cofactor is Mn(2+).

It localises to the golgi apparatus. It is found in the golgi stack membrane. The catalysed reaction is N(4)-{beta-D-GlcNAc-(1-&gt;2)-alpha-D-Man-(1-&gt;3)-[beta-D-GlcNAc-(1-&gt;2)-alpha-D-Man-(1-&gt;6)]-beta-D-Man-(1-&gt;4)-beta-D-GlcNAc-(1-&gt;4)-beta-D-GlcNAc}-L-asparaginyl-[protein] + GDP-beta-L-fucose = N(4)-{beta-D-GlcNAc-(1-&gt;2)-alpha-D-Man-(1-&gt;3)-[beta-D-GlcNAc-(1-&gt;2)-alpha-D-Man-(1-&gt;6)]-beta-D-Man-(1-&gt;4)-beta-D-GlcNAc-(1-&gt;4)-[alpha-L-Fuc(1-&gt;3)]-beta-D-GlcNAc}-L-asparaginyl-[protein] + GDP + H(+). The protein operates within protein modification; protein glycosylation. In terms of biological role, catalyzes alpha-1,3 glycosidic linkages of N-glycans. Plays a role in neuronal development by promoting ventral nerve cord formation, possibly by promoting interactions between migrating cells and the extracellular matrix or by promoting neural activity. This chain is Glycoprotein 3-alpha-L-fucosyltransferase A (FucTA), found in Drosophila melanogaster (Fruit fly).